Reading from the N-terminus, the 115-residue chain is Large ribosomal subunit protein uL18 (115 aa).

The interval 1–20 is disordered; that stretch reads MKYTKQEARKRRHYRVRSKV. Residues 8-18 show a composition bias toward basic residues; sequence ARKRRHYRVRS.

The protein belongs to the universal ribosomal protein uL18 family. Part of the 50S ribosomal subunit; part of the 5S rRNA/L5/L18/L25 subcomplex. Contacts the 5S and 23S rRNAs.

Functionally, this is one of the proteins that bind and probably mediate the attachment of the 5S RNA into the large ribosomal subunit, where it forms part of the central protuberance. This Mesoplasma florum (strain ATCC 33453 / NBRC 100688 / NCTC 11704 / L1) (Acholeplasma florum) protein is Large ribosomal subunit protein uL18.